Reading from the N-terminus, the 370-residue chain is Nodulation protein Z (370 aa).

In terms of domain architecture, GT23 spans 47–361; sequence SSNDRFVVSR…NDPGRLILIE (315 aa).

Belongs to the glycosyltransferase 23 family.

In terms of biological role, fucosyltransferase which adds the fucose moiety of the nod factor on its terminal reducing N-acetylglucosamine end. Uses GDP-fucose as the donor group. This chain is Nodulation protein Z (nodZ), found in Bradyrhizobium diazoefficiens (strain JCM 10833 / BCRC 13528 / IAM 13628 / NBRC 14792 / USDA 110).